A 397-amino-acid chain; its full sequence is MCNQTPLRSMALDSSGKQPEQQQQQQPRASSGNGEARLKLRRTPNEEHEPENYEDLPLDYSPSLFTSLERYLPEQLLNSTRIDKASFMRDLLLRYSPDTERVRVLRHKEYRDKIMSSYQRLHGEIYTLDPSSFFAPSFLGAFSRKSEPNFRSSMVESYPGIFTFEMFKPQFCEMLLAEVEHMEKWVYDSRSTIMRPNTMNNFGVVLDDFGFDSMLQKLVDDFISPIAQVLFPEVCGTSLDSHHGYIVEYGKDRDVDLGFHVDDSEVSLNVCLGKQFSGGELYFRGVRCDKHVNSDSTEKEVYDYSHVPGHAILHRGRHRHGARATTSGHRANLILWCRSSTFREMKNYQRDFSGWCGGCKLDKQRRQRDSINATKEILARKAAEKTLVELASKSCAE.

The interval methionine 1 to leucine 56 is disordered. Over residues glutamine 18–proline 27 the composition is skewed to low complexity. A Fe2OG dioxygenase domain is found at serine 238–serine 339. 3 residues coordinate Fe cation: histidine 260, aspartate 262, and histidine 320. Residue arginine 330 participates in 2-oxoglutarate binding.

It depends on Fe(2+) as a cofactor. The cofactor is L-ascorbate. Expressed in roots, cotyledons, rosette leaves, cauline leaves and inflorescences.

The protein localises to the nucleus. It localises to the nucleoplasm. Participates in the epigenetic repression of flowering genes in association with CP2. Functions in the repression of several members of the MADS-box transcription factors family, including SEP3, during vegetative development via histone modification. In Arabidopsis thaliana (Mouse-ear cress), this protein is 2-oxoglutarate and iron-dependent oxygenase domain-containing protein ICU11.